Consider the following 117-residue polypeptide: Ubiquitin-like protein 3 (117 aa).

A Ubiquitin-like domain is found at 10–88; the sequence is INLRLILVSG…PFGKTTVMHL (79 aa). The S-palmitoyl cysteine moiety is linked to residue C113. C114 is modified (cysteine methyl ester). Residue C114 is the site of S-geranylgeranyl cysteine attachment. Positions 115 to 117 are cleaved as a propeptide — removed in mature form; sequence VIL.

It is found in the cell membrane. The protein is Ubiquitin-like protein 3 (Ubl3) of Mus musculus (Mouse).